We begin with the raw amino-acid sequence, 95 residues long: Aspartyl/glutamyl-tRNA(Asn/Gln) amidotransferase subunit C (95 aa).

The tract at residues 74 to 95 (GQALEPAPDADNEHFLVPQVVE) is disordered.

This sequence belongs to the GatC family. As to quaternary structure, heterotrimer of A, B and C subunits.

It carries out the reaction L-glutamyl-tRNA(Gln) + L-glutamine + ATP + H2O = L-glutaminyl-tRNA(Gln) + L-glutamate + ADP + phosphate + H(+). The enzyme catalyses L-aspartyl-tRNA(Asn) + L-glutamine + ATP + H2O = L-asparaginyl-tRNA(Asn) + L-glutamate + ADP + phosphate + 2 H(+). Allows the formation of correctly charged Asn-tRNA(Asn) or Gln-tRNA(Gln) through the transamidation of misacylated Asp-tRNA(Asn) or Glu-tRNA(Gln) in organisms which lack either or both of asparaginyl-tRNA or glutaminyl-tRNA synthetases. The reaction takes place in the presence of glutamine and ATP through an activated phospho-Asp-tRNA(Asn) or phospho-Glu-tRNA(Gln). This Salinibacter ruber (strain DSM 13855 / M31) protein is Aspartyl/glutamyl-tRNA(Asn/Gln) amidotransferase subunit C.